A 467-amino-acid chain; its full sequence is Ethanolamine ammonia-lyase reactivase EutA (467 aa).

It belongs to the EutA family.

The protein localises to the bacterial microcompartment. It functions in the pathway amine and polyamine degradation; ethanolamine degradation. Reactivates suicidally inhibited ethanolamine ammonia-lyase (EAL), cyanocobalamin-inactivated EAL and O(2)-inactivated EAL; requires Mg(2+), ATP and adenosylcobalamin. Reactivation probably occurs by the ATP-dependent exchange of cobalamin. Protects EAL from inhibition by CN-B12, does not have adenosylation activity. In terms of biological role, expression of the eut operon allows this bacteria to use ethanolamine as a carbon, nitrogen and energy source. It relies on cobalamin (vitamin B12) both as a cofactor for the ethanolamine ammonia-lyase (EAL) activity and to induce the operon. EA enhances bacterial survival in macrophages in a concentration-dependent manner, suggesting it is an important nutrient during infection. This is Ethanolamine ammonia-lyase reactivase EutA from Salmonella typhimurium (strain LT2 / SGSC1412 / ATCC 700720).